Reading from the N-terminus, the 77-residue chain is uncharacterized protein (77 aa).

This is an uncharacterized protein from Escherichia phage 186 (Bacteriophage 186).